Reading from the N-terminus, the 87-residue chain is Small ribosomal subunit protein bS20 (87 aa).

The tract at residues 1-22 (MANSAQARKRARQSLKARAHNA) is disordered. Over residues 7-19 (ARKRARQSLKARA) the composition is skewed to basic residues.

The protein belongs to the bacterial ribosomal protein bS20 family.

Its function is as follows. Binds directly to 16S ribosomal RNA. In Laribacter hongkongensis (strain HLHK9), this protein is Small ribosomal subunit protein bS20.